Consider the following 533-residue polypeptide: 2-isopropylmalate synthase (533 aa).

In terms of domain architecture, Pyruvate carboxyltransferase spans 8–269 (IIIFDTTLRD…YYNPFLGRPA (262 aa)). Positions 17, 208, 210, and 244 each coordinate Mn(2+). Positions 408–533 (RLELVQVSCG…VSANPAKASL (126 aa)) are regulatory domain.

The protein belongs to the alpha-IPM synthase/homocitrate synthase family. LeuA type 1 subfamily. As to quaternary structure, homodimer. The cofactor is Mn(2+).

The protein resides in the cytoplasm. It carries out the reaction 3-methyl-2-oxobutanoate + acetyl-CoA + H2O = (2S)-2-isopropylmalate + CoA + H(+). It functions in the pathway amino-acid biosynthesis; L-leucine biosynthesis; L-leucine from 3-methyl-2-oxobutanoate: step 1/4. In terms of biological role, catalyzes the condensation of the acetyl group of acetyl-CoA with 3-methyl-2-oxobutanoate (2-ketoisovalerate) to form 3-carboxy-3-hydroxy-4-methylpentanoate (2-isopropylmalate). This Picosynechococcus sp. (strain ATCC 27264 / PCC 7002 / PR-6) (Agmenellum quadruplicatum) protein is 2-isopropylmalate synthase.